Consider the following 241-residue polypeptide: Beta-casein (241 aa).

A signal peptide spans Met-1–Ala-15. The interval Leu-21–Thr-45 is disordered. The residue at position 24 (Ser-24) is a Phosphoserine; in form 4-P, form 5-P, form 6-P and form 7-P. Ser-25 is subject to Phosphoserine; in form 7-P. Thr-27 carries the post-translational modification Phosphothreonine; in form 6-P and form 7-P. Residues Ser-30 and Ser-32 each carry the phosphoserine modification. Position 33 is a phosphoserine; in form 5-P, form 6-P and form 7-P (Ser-33). Phosphoserine; in form 4-P, form 5-P, form 6-P and form 7-P occurs at positions 38, 39, and 40. Asn-150 carries the deamidated asparagine modification.

The protein belongs to the beta-casein family. In terms of processing, there are at least five different forms found in milk, with varying degrees of phosphorylation. These include form 3-P which is phosphorylated at three sites that have not been determined, this form is present in very low amounts, form 4-P which is phosphorylated at four sites, form 5-P which is phosphorylated at five sites, form 6-P which is phosphorylated at six sites, and form 7-P which is phosphorylated at seven sites. Spontaneous deamidation of Asn-150 produces aspartate or isoaspartate. As to expression, mammary gland specific. Secreted in milk.

It is found in the secreted. Functionally, important role in determination of the surface properties of the casein micelles. The polypeptide is Beta-casein (Equus caballus (Horse)).